An 81-amino-acid polypeptide reads, in one-letter code: Costars family protein ABRACL (81 aa).

The residue at position 1 (Met1) is an N-acetylmethionine.

The protein belongs to the costars family.

The chain is Costars family protein ABRACL (ABRACL) from Homo sapiens (Human).